The chain runs to 548 residues: Uridine-cytidine kinase-like 1 (548 aa).

A compositionally biased stretch (low complexity) spans 1–18 (MAAPPASMSAAPSPLQSA). A disordered region spans residues 1-74 (MAAPPASMSA…CKSEPPLLRT (74 aa)). Phosphoserine is present on residues Ser-56 and Ser-63. 105-112 (GGSASGKT) contacts ATP. Phosphoserine is present on Ser-539.

Belongs to the uridine kinase family. In terms of assembly, interacts with RNF19B. Post-translationally, ubiquitinated by RNF19B; which induces proteasomal degradation.

It localises to the cytoplasm. The protein localises to the nucleus. It carries out the reaction uridine + ATP = UMP + ADP + H(+). The catalysed reaction is cytidine + ATP = CMP + ADP + H(+). It participates in pyrimidine metabolism; UMP biosynthesis via salvage pathway; UMP from uridine: step 1/1. In terms of biological role, may contribute to UTP accumulation needed for blast transformation and proliferation. This chain is Uridine-cytidine kinase-like 1 (Uckl1), found in Mus musculus (Mouse).